A 157-amino-acid chain; its full sequence is Transcription elongation factor GreA (157 aa).

The stretch at 17 to 37 (ELERLLKLRPQISEAIAEARE) forms a coiled coil.

The protein belongs to the GreA/GreB family.

In terms of biological role, necessary for efficient RNA polymerase transcription elongation past template-encoded arresting sites. The arresting sites in DNA have the property of trapping a certain fraction of elongating RNA polymerases that pass through, resulting in locked ternary complexes. Cleavage of the nascent transcript by cleavage factors such as GreA or GreB allows the resumption of elongation from the new 3'terminus. GreA releases sequences of 2 to 3 nucleotides. This is Transcription elongation factor GreA from Vibrio parahaemolyticus serotype O3:K6 (strain RIMD 2210633).